A 135-amino-acid polypeptide reads, in one-letter code: Ribosome-binding factor A (135 aa).

The protein belongs to the RbfA family. Monomer. Binds 30S ribosomal subunits, but not 50S ribosomal subunits or 70S ribosomes.

It localises to the cytoplasm. Its function is as follows. One of several proteins that assist in the late maturation steps of the functional core of the 30S ribosomal subunit. Associates with free 30S ribosomal subunits (but not with 30S subunits that are part of 70S ribosomes or polysomes). Required for efficient processing of 16S rRNA. May interact with the 5'-terminal helix region of 16S rRNA. This is Ribosome-binding factor A from Bartonella henselae (strain ATCC 49882 / DSM 28221 / CCUG 30454 / Houston 1) (Rochalimaea henselae).